The sequence spans 156 residues: Small ribosomal subunit protein uS7 (156 aa).

It belongs to the universal ribosomal protein uS7 family. As to quaternary structure, part of the 30S ribosomal subunit. Contacts proteins S9 and S11.

Its function is as follows. One of the primary rRNA binding proteins, it binds directly to 16S rRNA where it nucleates assembly of the head domain of the 30S subunit. Is located at the subunit interface close to the decoding center, probably blocks exit of the E-site tRNA. In Streptomyces avermitilis (strain ATCC 31267 / DSM 46492 / JCM 5070 / NBRC 14893 / NCIMB 12804 / NRRL 8165 / MA-4680), this protein is Small ribosomal subunit protein uS7.